Here is a 4555-residue protein sequence, read N- to C-terminus: Protocadherin Fat 3 (4555 aa).

The N-terminal stretch at methionine 1–glycine 31 is a signal peptide. Residues leucine 32–glutamate 4153 lie on the Extracellular side of the membrane. Cadherin domains lie at threonine 43–phenylalanine 157, serine 158–isoleucine 265, proline 263–lysine 374, glutamate 376–phenylalanine 471, glutamine 472–phenylalanine 577, glutamate 578–phenylalanine 680, lysine 726–phenylalanine 830, leucine 831–phenylalanine 935, isoleucine 936–phenylalanine 1042, proline 1043–threonine 1147, serine 1148–phenylalanine 1253, proline 1254–proline 1358, aspartate 1362–phenylalanine 1459, serine 1460–phenylalanine 1565, threonine 1566–phenylalanine 1768, leucine 1769–phenylalanine 1882, threonine 1883–phenylalanine 1985, threonine 1982–phenylalanine 2083, valine 2084–phenylalanine 2185, aspartate 2186–phenylalanine 2286, aspartate 2287–phenylalanine 2393, asparagine 2394–phenylalanine 2495, serine 2496–phenylalanine 2599, methionine 2600–phenylalanine 2707, threonine 2708–phenylalanine 2813, glutamate 2814–phenylalanine 2923, alanine 2924–cysteine 3028, aspartate 3029–phenylalanine 3130, serine 3131–phenylalanine 3235, glutamate 3236–phenylalanine 3340, serine 3341–phenylalanine 3445, threonine 3446–alanine 3550, and isoleucine 3551–phenylalanine 3652. The N-linked (GlcNAc...) asparagine glycan is linked to asparagine 48. The N-linked (GlcNAc...) asparagine glycan is linked to asparagine 341. N-linked (GlcNAc...) asparagine glycosylation is found at asparagine 481, asparagine 562, asparagine 667, asparagine 799, asparagine 879, asparagine 898, and asparagine 1006. N-linked (GlcNAc...) asparagine glycans are attached at residues asparagine 1367 and asparagine 1429. N-linked (GlcNAc...) asparagine glycosylation is present at asparagine 1751. Residues asparagine 1944, asparagine 1993, and asparagine 1996 are each glycosylated (N-linked (GlcNAc...) asparagine). N-linked (GlcNAc...) asparagine glycans are attached at residues asparagine 2208, asparagine 2292, asparagine 2331, and asparagine 2467. N-linked (GlcNAc...) asparagine glycosylation is present at asparagine 2734. Asparagine 3000 carries N-linked (GlcNAc...) asparagine glycosylation. Asparagine 3201 is a glycosylation site (N-linked (GlcNAc...) asparagine). N-linked (GlcNAc...) asparagine glycans are attached at residues asparagine 3449, asparagine 3618, and asparagine 3741. An EGF-like 1 domain is found at serine 3794–serine 3832. 3 disulfides stabilise this stretch: cysteine 3798–cysteine 3809, cysteine 3803–cysteine 3821, and cysteine 3823–cysteine 3831. Residues histidine 3834–cysteine 4017 form the Laminin G-like domain. N-linked (GlcNAc...) asparagine glycosylation is present at asparagine 3926. 10 disulfide bridges follow: cysteine 3984–cysteine 4017, cysteine 4024–cysteine 4035, cysteine 4029–cysteine 4045, cysteine 4047–cysteine 4056, cysteine 4063–cysteine 4074, cysteine 4068–cysteine 4083, cysteine 4085–cysteine 4094, cysteine 4101–cysteine 4112, cysteine 4106–cysteine 4121, and cysteine 4123–cysteine 4132. 2 consecutive EGF-like domains span residues tyrosine 4020 to glutamate 4057 and glutamate 4059 to glutamate 4095. Residues aspartate 4097–glycine 4133 form the EGF-like 4; calcium-binding domain. Residues leucine 4154 to phenylalanine 4174 form a helical membrane-spanning segment. Residues arginine 4175–valine 4555 lie on the Cytoplasmic side of the membrane. Over residues serine 4326–aspartate 4343 the composition is skewed to polar residues. 3 disordered regions span residues serine 4326–aspartate 4347, glycine 4395–aspartate 4424, and proline 4452–glycine 4472. 2 positions are modified to omega-N-methylarginine: arginine 4508 and arginine 4518.

Restricted to the nervous system. Abundantly expressed in the fetal brain.

Its subcellular location is the membrane. Its function is as follows. May play a role in the interactions between neurites derived from specific subsets of neurons during development. This is Protocadherin Fat 3 (Fat3) from Rattus norvegicus (Rat).